The primary structure comprises 334 residues: MNIGIVNDLPLAVEAMRRAIARRPEHRVLWVATDGPQAVELCAAQPPDIVLMDLIMPKFDGIEATRRIMRPERPCAILIVTSCIGANAWRVFEAMGAGALDAVDTPRLGDGAAGDTTKLLLAKIDQIGRLLDAPGSSRLAGAAARGGAGPLIAIGASAGGPGALASILGNLPADFNAPIVIVQHVDRAFAEGMAQWLDGQTRLAVRVAREGDRPQPGVALLAATDDHLRITRAGTLEYTREPAATPYRPSVDVFFNSLTEHWPGRVIGVLLTGMGRDGAIGLKALRMKGYHTIAQDEATSAVYGMPKAAATLGAARAILPLGRIAGELAALARI.

Positions 2 to 120 constitute a Response regulatory domain; that stretch reads NIGIVNDLPL…GAAGDTTKLL (119 aa). Residue D53 is modified to 4-aspartylphosphate. In terms of domain architecture, CheB-type methylesterase spans 134–334; the sequence is PGSSRLAGAA…AGELAALARI (201 aa). Residues S157, H184, and D277 contribute to the active site.

Belongs to the CheB family. Phosphorylated by CheA. Phosphorylation of the N-terminal regulatory domain activates the methylesterase activity.

The protein resides in the cytoplasm. The catalysed reaction is [protein]-L-glutamate 5-O-methyl ester + H2O = L-glutamyl-[protein] + methanol + H(+). The enzyme catalyses L-glutaminyl-[protein] + H2O = L-glutamyl-[protein] + NH4(+). Involved in chemotaxis. Part of a chemotaxis signal transduction system that modulates chemotaxis in response to various stimuli. Catalyzes the demethylation of specific methylglutamate residues introduced into the chemoreceptors (methyl-accepting chemotaxis proteins or MCP) by CheR. Also mediates the irreversible deamidation of specific glutamine residues to glutamic acid. This is Protein-glutamate methylesterase/protein-glutamine glutaminase 2 from Burkholderia orbicola (strain AU 1054).